The primary structure comprises 399 residues: Secreted RxLR effector protein 36 (399 aa).

The signal sequence occupies residues 1 to 21 (MRGTIYVAIAILVAASSRSSA). A RxLR-dEER motif is present at residues 50–71 (RILRESRGSNDKLAVGAGDEER). An N-linked (GlcNAc...) asparagine glycan is attached at Asn-75. Residues 126-145 (IDPTPSNLGGQALHAPPNPD) form a disordered region.

It belongs to the RxLR effector family.

It is found in the secreted. It localises to the host nucleus. Secreted effector that completely suppresses the host cell death induced by cell death-inducing proteins. The protein is Secreted RxLR effector protein 36 of Plasmopara viticola (Downy mildew of grapevine).